The chain runs to 367 residues: Phosphoribosylaminoimidazole-succinocarboxamide synthase (367 aa).

This sequence belongs to the SAICAR synthetase family.

The enzyme catalyses 5-amino-1-(5-phospho-D-ribosyl)imidazole-4-carboxylate + L-aspartate + ATP = (2S)-2-[5-amino-1-(5-phospho-beta-D-ribosyl)imidazole-4-carboxamido]succinate + ADP + phosphate + 2 H(+). It participates in purine metabolism; IMP biosynthesis via de novo pathway; 5-amino-1-(5-phospho-D-ribosyl)imidazole-4-carboxamide from 5-amino-1-(5-phospho-D-ribosyl)imidazole-4-carboxylate: step 1/2. This chain is Phosphoribosylaminoimidazole-succinocarboxamide synthase, found in Shewanella oneidensis (strain ATCC 700550 / JCM 31522 / CIP 106686 / LMG 19005 / NCIMB 14063 / MR-1).